The chain runs to 104 residues: Phosphoribosyl-ATP pyrophosphatase (104 aa).

It belongs to the PRA-PH family.

It is found in the cytoplasm. The catalysed reaction is 1-(5-phospho-beta-D-ribosyl)-ATP + H2O = 1-(5-phospho-beta-D-ribosyl)-5'-AMP + diphosphate + H(+). Its pathway is amino-acid biosynthesis; L-histidine biosynthesis; L-histidine from 5-phospho-alpha-D-ribose 1-diphosphate: step 2/9. This Streptococcus sanguinis (strain SK36) protein is Phosphoribosyl-ATP pyrophosphatase.